The primary structure comprises 137 residues: Nuclear transition protein 2 (137 aa).

The span at 1–21 shows a compositional bias: polar residues; the sequence is MDTKTQSLPNAHTQPHSNSGP. The interval 1–137 is disordered; the sequence is MDTKTQSLPN…KRRSSGRKYN (137 aa). Zn(2+) is bound by residues H12, H16, H24, C29, C31, C35, and C38. Residues 22 to 74 show a composition bias toward low complexity; it reads QSHACNQCSCSHHCQNCSQSCDRSQSCSRSRSSSQSPTGHRSLPGHQSQSLSP. Residues 78–91 show a composition bias toward basic residues; it reads PRHRKRAMHSHRCP. The short motif at 110–118 is the Nuclear localization signal element; the sequence is GKANKRKGI. Residues 126 to 137 show a composition bias toward basic residues; the sequence is KTKRRSSGRKYN. Position 132 is a phosphoserine (S132).

The protein belongs to the nuclear transition protein 2 family. In terms of tissue distribution, testis. Expression is restricted to haploid germ cells.

Its subcellular location is the nucleus. The protein localises to the nucleolus. The protein resides in the chromosome. Functionally, plays a key role in the replacement of histones to protamine in the elongating spermatids of mammals. In condensing spermatids, loaded onto the nucleosomes, where it promotes the recruitment and processing of protamines, which are responsible for histone eviction. The chain is Nuclear transition protein 2 (TNP2) from Sus scrofa (Pig).